A 290-amino-acid polypeptide reads, in one-letter code: MPADTGMEKPTASPIAGAPASASHTPDKPRSASEHRKSSKPIMEKRRRARINESLGQLKMLILDALKKDSSRHSKLEKADILEMTVKHLRNLQRAQMAAALSADPSVLGKYRAGFNECMNEVTRFLSTCEGVNADVRARLLGHLSACLGQIVAMNYLPPPPAGQPAHLAQPLHVQLPPTTTGAVPVPCKLEPTEALSPKVYGGFQLVPATDGQFAFLIPNPAFPPGSGPVIPLYANANVPVSTAWRSSERVHPPAGIPGAGLDIIWARVVPASQAGSPIAERREAVWRPW.

The tract at residues 1-47 (MPADTGMEKPTASPIAGAPASASHTPDKPRSASEHRKSSKPIMEKRR) is disordered. A compositionally biased stretch (low complexity) spans 10 to 23 (PTASPIAGAPASAS). The span at 25 to 36 (TPDKPRSASEHR) shows a compositional bias: basic and acidic residues. In terms of domain architecture, bHLH spans 35 to 92 (HRKSSKPIMEKRRRARINESLGQLKMLILDALKKDSSRHSKLEKADILEMTVKHLRNL). In terms of domain architecture, Orange spans 111-144 (YRAGFNECMNEVTRFLSTCEGVNADVRARLLGHL). Residues 287–290 (WRPW) carry the WRPW motif motif.

Transcription repression requires formation of a complex with a corepressor protein of the Groucho/TLE family.

The protein localises to the nucleus. Transcriptional repressor of genes that require a bHLH protein for their transcription. May act as a negative regulator of myogenesis by inhibiting the functions of MYOD1 and ASH1. The chain is Transcription factor HES-1 (HES1) from Gallus gallus (Chicken).